The chain runs to 346 residues: MDGVGESSTQNEVEEKPVIVRVKRKVGQSLLDAFWLEINERPLKRPTLDFSKLSISDSGERGPSVAEDVKPKKVLVRHLETVTDSETTADIIHSFFESDHNEKSCSKGKFEERKIAFKKDNRKEQRLTKSVQKQQIASENARFEQIWRSRKGNKEGIHEKCHFFDVIRVDTEERRDNAQEFTSLEDQKMLASFLPLLRECIPTAAEEIEADIQSSHTEEYVYDYYAVNEEMDISEDSSKNQFPLVIVEDEEEFCDGSDESDYDSEDSNAEDHPKTDYPEEEEEEEEEDDDDDDDDESEEEKSEASDESDDEETSKRHVRSVLGDDEFDDYAEDVYGYSESDEEFES.

The residue at position 1 (Met-1) is an N-acetylmethionine. Composition is skewed to acidic residues over residues Phe-253–Asn-268, Pro-278–Glu-312, and Gly-323–Glu-332. Residues Phe-253 to Ser-346 are disordered.

The protein belongs to the IWR1/SLC7A6OS family. In terms of assembly, interacts with NRPD1. Associates with Pol II and Pol V complexes.

Functionally, probable regulatory factor for several RNA polymerases. Effector involved in facilitation of Pol V transcription as RNA scaffold and recruitment of silencing complex to target genomic sites. In Arabidopsis thaliana (Mouse-ear cress), this protein is RNA-directed DNA methylation 4 (RDM4).